The primary structure comprises 392 residues: ESX-1 secretion-associated protein EspA (392 aa).

The tract at residues 302 to 392 is disordered; the sequence is TRQALRPRAD…GQKVLVRNVV (91 aa). Residues 334–344 show a composition bias toward gly residues; that stretch reads QGMGGPVGMGG.

As to quaternary structure, homodimer; disulfide-linked.

The protein localises to the secreted. Functionally, required for secretion of EsxA (ESAT-6) and EsxB (CFP-10) and for virulence. This chain is ESX-1 secretion-associated protein EspA, found in Mycobacterium tuberculosis (strain CDC 1551 / Oshkosh).